We begin with the raw amino-acid sequence, 286 residues long: Aquaporin NIP4-1 (286 aa).

A run of 2 helical transmembrane segments spans residues 59–79 (VMVE…AALM) and 86–106 (LTFP…LSWL). Residues 112 to 114 (NPA) carry the NPA 1 motif. Transmembrane regions (helical) follow at residues 133–153 (LYVA…NAVM), 173–193 (LPFL…ATVA), and 201–221 (TVGG…IGPV). The NPA 2 signature appears at 227 to 229 (NPA). Residues 241–261 (YDGVWIYVVAPVAGMLVGALC) form a helical membrane-spanning segment.

It belongs to the MIP/aquaporin (TC 1.A.8) family. NIP (TC 1.A.8.12) subfamily. As to expression, expressed in leaves and at lower levels in roots.

The protein localises to the membrane. Functionally, aquaporins facilitate the transport of water and small neutral solutes across cell membranes. The chain is Aquaporin NIP4-1 (NIP4-1) from Oryza sativa subsp. japonica (Rice).